The following is a 1003-amino-acid chain: Serine/threonine-protein kinase spk-1 (1003 aa).

Disordered regions lie at residues 92 to 112 (NSTN…TQNE), 169 to 309 (NEND…SATS), and 337 to 408 (RPSI…KRGG). Residues 202–211 (SDEEDVESQD) are compositionally biased toward acidic residues. Residues 248–265 (SNDDKNEKDVLVDEDTSK) show a composition bias toward basic and acidic residues. The span at 285-300 (TIDSSVSSSTSSSSTG) shows a compositional bias: low complexity. The span at 346-359 (KKTEVNANEERLDD) shows a compositional bias: basic and acidic residues. Residues 422 to 904 (YHVIRKLGWG…AKIALKHPFL (483 aa)) form the Protein kinase domain. Residues 428–436 (LGWGHFSTV) and lysine 451 contribute to the ATP site. Aspartate 555 (proton acceptor) is an active-site residue. The disordered stretch occupies residues 927-1003 (DGLIPEPFDG…DIERFQLDLQ (77 aa)). Over residues 936–953 (GNEHQEVYRDENDSRSAS) the composition is skewed to basic and acidic residues. The span at 954–964 (ERSANSRSAGG) shows a compositional bias: low complexity. Over residues 983–992 (VITNNETTDI) the composition is skewed to polar residues. A compositionally biased stretch (basic and acidic residues) spans 994-1003 (DIERFQLDLQ).

It belongs to the protein kinase superfamily. Ser/Thr protein kinase family. Interacts with rsp-3. In terms of tissue distribution, predominantly coexpressed with rsp-3 in adult hermaphrodite germlines.

The catalysed reaction is L-seryl-[protein] + ATP = O-phospho-L-seryl-[protein] + ADP + H(+). The enzyme catalyses L-threonyl-[protein] + ATP = O-phospho-L-threonyl-[protein] + ADP + H(+). Required for embryogenesis and germline development in both adult hermaphrodites and males. SR-protein kinase (SRPK) that binds directly to and phosphorylates the RS domain of rsp-3/CeSF2 in vitro. The chain is Serine/threonine-protein kinase spk-1 (spk-1) from Caenorhabditis elegans.